A 582-amino-acid chain; its full sequence is GPI-anchor transamidase component PIGT (582 aa).

A signal peptide spans 1-25 (MAAAMPLGLPLRLLVLLLVGRGCCG). At 26-529 (CAEGPRDSLR…NLPTPDFSMP (504 aa)) the chain is on the lumenal side. Asn-168 carries N-linked (GlcNAc...) asparagine glycosylation. Intrachain disulfides connect Cys-199-Cys-276 and Cys-230-Cys-235. Asn-295 and Asn-331 each carry an N-linked (GlcNAc...) asparagine glycan. Asn-465, Asp-525, Ser-527, and Asn-531 together coordinate a 2-acyl-6-[6-phosphoethanolamine-alpha-D-mannosyl-(1-&gt;2)-6-phosphoethanolamine-alpha-D-mannosyl-(1-&gt;6)-2-phosphoethanolamine-alpha-D-mannosyl-(1-&gt;4)-alpha-D-glucosaminyl]-1-(1-radyl,2-acyl-sn-glycero-3-phospho)-1D-myo-inositol. Residues 530-552 (YNVICLTCTVVAVCYGSFYNLLT) traverse the membrane as a helical segment. Over 553–582 (RTFHIEEPKSGGLAKRLANLIRRARGVPPL) the chain is Cytoplasmic.

This sequence belongs to the PIGT family. In terms of assembly, heteropentamer. Part of the GPI-anchor transamidase complex, consisting of PIGK, PIGT, PIGS, PIGU and GAA1. The disulfide bond between PIGK/GPI8 and PIGT is important for normal enzyme activity.

The protein resides in the endoplasmic reticulum membrane. It functions in the pathway glycolipid biosynthesis; glycosylphosphatidylinositol-anchor biosynthesis. Component of the glycosylphosphatidylinositol-anchor (GPI-anchor) transamidase (GPI-T) complex that catalyzes the formation of the linkage between a proprotein and a GPI-anchor and participates in GPI anchored protein biosynthesis. May play a crucial role in GPI-T complex assembly in the luminal layer. Binds GPI-anchor. In Mus musculus (Mouse), this protein is GPI-anchor transamidase component PIGT.